Here is a 612-residue protein sequence, read N- to C-terminus: Elongation factor 4 (612 aa).

In terms of domain architecture, tr-type G spans 12–194 (SRIRNFSIIA…QIVEKVPAPS (183 aa)). Residues 24-29 (DHGKST) and 141-144 (NKID) each bind GTP.

Belongs to the TRAFAC class translation factor GTPase superfamily. Classic translation factor GTPase family. LepA subfamily.

The protein localises to the cell membrane. It catalyses the reaction GTP + H2O = GDP + phosphate + H(+). Required for accurate and efficient protein synthesis under certain stress conditions. May act as a fidelity factor of the translation reaction, by catalyzing a one-codon backward translocation of tRNAs on improperly translocated ribosomes. Back-translocation proceeds from a post-translocation (POST) complex to a pre-translocation (PRE) complex, thus giving elongation factor G a second chance to translocate the tRNAs correctly. Binds to ribosomes in a GTP-dependent manner. The chain is Elongation factor 4 from Bacillus licheniformis (strain ATCC 14580 / DSM 13 / JCM 2505 / CCUG 7422 / NBRC 12200 / NCIMB 9375 / NCTC 10341 / NRRL NRS-1264 / Gibson 46).